The sequence spans 582 residues: Trans-ocimene synthase, chloroplastic (582 aa).

Residues 1-35 (MSLIIQSLPHWSRIPPRPPQLSQFQNSSRPKPLIQ) constitute a chloroplast transit peptide. Positions 296, 333, 337, 474, and 477 each coordinate (2E)-geranyl diphosphate. The Mg(2+) site is built by Asp333 and Asp337. The DDXXD motif motif lies at 333–337 (DDIYD). Mg(2+) contacts are provided by Asp477, Thr481, and Glu485.

This sequence belongs to the terpene synthase family. Tpsb subfamily. As to quaternary structure, monomer. It depends on Mg(2+) as a cofactor. Mn(2+) is required as a cofactor. As to expression, expressed in male and female leaves. Barely detectable in fruits and shoots.

It localises to the plastid. The protein resides in the chloroplast. It catalyses the reaction (2E)-geranyl diphosphate = (E)-beta-ocimene + diphosphate. The protein operates within secondary metabolite biosynthesis; terpenoid biosynthesis. In terms of biological role, monoterpene synthase (TPS) involved in the biosynthesis of monoterpene natural products used by traditional Chinese medicine to treat headache, inflammation and intoxication. Catalyzes the conversion of (2E)-geranyl diphosphate (GPP) into (E)-beta-ocimene. This is Trans-ocimene synthase, chloroplastic from Litsea cubeba (Aromatic litsea).